The following is a 101-amino-acid chain: Protein S100-A7 (101 aa).

Ser-2 is modified (N-acetylserine). 2 EF-hand domains span residues 13-48 and 50-85; these read MIDMFHKYTRRDDKIEKPSLLTMMKENFPNFLSACD and KGTNYLADVFEKKDKNEDKKIDFSEFLSLLGDIATD. His-18 and Asp-25 together coordinate Zn(2+). Residues Cys-47 and Cys-96 are joined by a disulfide bond. 5 residues coordinate Ca(2+): Asp-63, Asn-65, Asp-67, Lys-69, and Glu-74. Residues His-87 and His-91 each contribute to the Zn(2+) site.

As to quaternary structure, interacts with RANBP9. In terms of tissue distribution, fetal ear, skin, and tongue and human cell lines. Highly up-regulated in psoriatic epidermis. Also highly expressed in the urine of bladder squamous cell carcinoma (SCC) bearing patients.

It localises to the cytoplasm. The protein resides in the secreted. The chain is Protein S100-A7 (S100A7) from Homo sapiens (Human).